The sequence spans 148 residues: MNLTTQKRLAADILKVGVNRIWIDPERIDEVSRAITRDGVKQLIKDGAIKAKPKKGISSYRSKKIAQQKKKGRRRGPGSIKGAKGARRPKKDEWMTTIRALRKDLKEMRDNREINKSTYRKLYKMAKGGAFKSKSYMKTYARDHDMLR.

A compositionally biased stretch (basic residues) spans 52–76 (KPKKGISSYRSKKIAQQKKKGRRRG). Residues 52–95 (KPKKGISSYRSKKIAQQKKKGRRRGPGSIKGAKGARRPKKDEWM) form a disordered region.

This sequence belongs to the eukaryotic ribosomal protein eL19 family. In terms of assembly, part of the 50S ribosomal subunit.

In terms of biological role, binds to the 23S rRNA. The protein is Large ribosomal subunit protein eL19 of Methanothermobacter thermautotrophicus (strain ATCC 29096 / DSM 1053 / JCM 10044 / NBRC 100330 / Delta H) (Methanobacterium thermoautotrophicum).